We begin with the raw amino-acid sequence, 524 residues long: Cytokinin dehydrogenase 4 (524 aa).

Positions 1–26 are cleaved as a signal peptide; sequence MTNTLCLSLITLITLFISLTPTLIKS. 2 N-linked (GlcNAc...) asparagine glycosylation sites follow: asparagine 39 and asparagine 58. Positions 60-249 constitute an FAD-binding PCMH-type domain; that stretch reads TDENPGAVLC…TRARIALDHA (190 aa). 3 residues coordinate FAD: alanine 104, glycine 106, and glycine 108. Histidine 109 carries the pros-8alpha-FAD histidine modification. Residues serine 110 and glutamine 114 each contribute to the FAD site. N-linked (GlcNAc...) asparagine glycosylation is present at asparagine 124. Residues aspartate 173, serine 178, serine 184, isoleucine 188, and isoleucine 239 each contribute to the FAD site. Asparagine 411 carries an N-linked (GlcNAc...) asparagine glycan. Residues tyrosine 482, serine 517, and glutamine 520 each coordinate FAD.

Belongs to the oxygen-dependent FAD-linked oxidoreductase family. The cofactor is FAD. Expressed in trichomes and in developing stomata of young growing leaves. Strong expression in stipules and in the root cap, but not detected in the root meristem.

It localises to the secreted. The protein resides in the extracellular space. The catalysed reaction is N(6)-dimethylallyladenine + A + H2O = 3-methyl-2-butenal + adenine + AH2. Its function is as follows. Catalyzes the oxidation of cytokinins, a family of N(6)-substituted adenine derivatives that are plant hormones, where the substituent is an isopentenyl group. In Arabidopsis thaliana (Mouse-ear cress), this protein is Cytokinin dehydrogenase 4 (CKX4).